The primary structure comprises 350 residues: MERIIMHYDMDAFYASIEINRNPKLKNKPLVVGENIVTTASYEARKYDIHSAMKVSDAKLLCPKLIVLPVDKTEYIRISNEIHNLILKITNKVEFVATDEGYIDLTDVIKPENKKAFVIKFKQRIKELTNLTCSVGIGFNKLSAKIASDINKPFGFFIFENEEEFIKHISDKKIKIIPGVGKKFFEILKNDKIFYVKDIFKYPLDYLVKKYGKSRGENLYCSVRGIDFDEVEYQREIYSIGNEETFLIPLQNNSEIIREFNSLFEYTFERLLKNNVFTQSITIKMRYTSFKTYTKSKKLKFSTRSKDFLYNEMFELINSFEKEDEVRLLGVYFGDIKKSNLVQLALNKNL.

One can recognise a UmuC domain in the interval 5-181; that stretch reads IMHYDMDAFY…KKIKIIPGVG (177 aa). Mg(2+) is bound by residues Asp-9 and Asp-99. Glu-100 is an active-site residue.

It belongs to the DNA polymerase type-Y family. Monomer. It depends on Mg(2+) as a cofactor.

It is found in the cytoplasm. The enzyme catalyses DNA(n) + a 2'-deoxyribonucleoside 5'-triphosphate = DNA(n+1) + diphosphate. Functionally, poorly processive, error-prone DNA polymerase involved in untargeted mutagenesis. Copies undamaged DNA at stalled replication forks, which arise in vivo from mismatched or misaligned primer ends. These misaligned primers can be extended by PolIV. Exhibits no 3'-5' exonuclease (proofreading) activity. May be involved in translesional synthesis, in conjunction with the beta clamp from PolIII. The chain is DNA polymerase IV from Fusobacterium nucleatum subsp. nucleatum (strain ATCC 25586 / DSM 15643 / BCRC 10681 / CIP 101130 / JCM 8532 / KCTC 2640 / LMG 13131 / VPI 4355).